The following is a 188-amino-acid chain: Heterodisulfide reductase subunit C-like protein (188 aa).

2 consecutive 4Fe-4S ferredoxin-type domains span residues 34–64 (KELG…FEWY) and 78–109 (DELL…FEVM). [4Fe-4S] cluster-binding residues include cysteine 44, cysteine 47, cysteine 50, cysteine 54, cysteine 89, cysteine 92, cysteine 95, and cysteine 99.

Belongs to the HdrC family. As to quaternary structure, the heterodisulfide reductase is composed of three subunits; HdlA, HdlB and HdlC. It forms a complex with the F420-non-reducing hydrogenase (Mvh), which provides the reducing equivalents to the heterodisulfide reductase.

Its subcellular location is the cytoplasm. Its function is as follows. Has oxidoreductase activity. The Hdl and Mvh subunits may together mediate electron transfer from hydrogen to an unidentified electron acceptor on the cytoplasmic side of the membrane. This Archaeoglobus profundus (strain DSM 5631 / JCM 9629 / NBRC 100127 / Av18) protein is Heterodisulfide reductase subunit C-like protein (hdlC).